The following is a 430-amino-acid chain: uncharacterized protein (430 aa).

Residues 207–223 (GETYMFGSANGLQLSIY) form a helical membrane-spanning segment.

It is found in the host membrane. May play a role in phage assembly. This is an uncharacterized protein from Pseudomonas phage Pf1 (Bacteriophage Pf1).